A 302-amino-acid polypeptide reads, in one-letter code: Ornithine carbamoyltransferase (302 aa).

Carbamoyl phosphate-binding positions include 52 to 55 (STRT), glutamine 79, arginine 103, and 130 to 133 (HPCQ). L-ornithine contacts are provided by residues asparagine 161, aspartate 221, and 225–226 (SM). Carbamoyl phosphate-binding positions include 261-262 (CL) and arginine 289.

It belongs to the aspartate/ornithine carbamoyltransferase superfamily. OTCase family.

It is found in the cytoplasm. It carries out the reaction carbamoyl phosphate + L-ornithine = L-citrulline + phosphate + H(+). Its pathway is amino-acid biosynthesis; L-arginine biosynthesis; L-arginine from L-ornithine and carbamoyl phosphate: step 1/3. Reversibly catalyzes the transfer of the carbamoyl group from carbamoyl phosphate (CP) to the N(epsilon) atom of ornithine (ORN) to produce L-citrulline. The sequence is that of Ornithine carbamoyltransferase from Methanospirillum hungatei JF-1 (strain ATCC 27890 / DSM 864 / NBRC 100397 / JF-1).